Here is a 358-residue protein sequence, read N- to C-terminus: Protein-glutamate methylesterase/protein-glutamine glutaminase 1 (358 aa).

In terms of domain architecture, Response regulatory spans 8 to 125 (RVLIVDDSAV…ARGLEGYAEE (118 aa)). Asp-59 is modified (4-aspartylphosphate). Positions 157–352 (PVPGSALRFR…LERVAERLIA (196 aa)) constitute a CheB-type methylesterase domain. Active-site residues include Ser-177, His-203, and Asp-299.

This sequence belongs to the CheB family. In terms of processing, phosphorylated by CheA. Phosphorylation of the N-terminal regulatory domain activates the methylesterase activity.

Its subcellular location is the cytoplasm. It carries out the reaction [protein]-L-glutamate 5-O-methyl ester + H2O = L-glutamyl-[protein] + methanol + H(+). The enzyme catalyses L-glutaminyl-[protein] + H2O = L-glutamyl-[protein] + NH4(+). Its function is as follows. Involved in chemotaxis. Part of a chemotaxis signal transduction system that modulates chemotaxis in response to various stimuli. Catalyzes the demethylation of specific methylglutamate residues introduced into the chemoreceptors (methyl-accepting chemotaxis proteins or MCP) by CheR. Also mediates the irreversible deamidation of specific glutamine residues to glutamic acid. In Xanthomonas campestris pv. campestris (strain ATCC 33913 / DSM 3586 / NCPPB 528 / LMG 568 / P 25), this protein is Protein-glutamate methylesterase/protein-glutamine glutaminase 1.